We begin with the raw amino-acid sequence, 324 residues long: DGAT1/2-independent enzyme synthesizing storage lipids (324 aa).

Residues 1–50 (MIDKNQTCGVGQDSVPYMICLIHILEEWFGVEQLEDYLNFANYLLWVFTP) lie on the Lumenal side of the membrane. Asparagine 5 is a glycosylation site (N-linked (GlcNAc...) asparagine). A helical transmembrane segment spans residues 51 to 71 (LILLILPYFTIFLLYLTIIFL). At 72-125 (HIYKRKNVLKEAYSHNLWDGARKTVATLWDGHAAVWHGYEVHGMEKIPEDGPAL) the chain is on the cytoplasmic side. A helical membrane pass occupies residues 126-146 (IIFYHGAIPIDFYYFMAKIFI). The active site involves histidine 130. Residues 147 to 324 (HKGRTCRVVA…IMSALLERFH (178 aa)) lie on the Lumenal side of the membrane.

The protein belongs to the diacylglycerol acyltransferase family. Highly divergent.

Its subcellular location is the endoplasmic reticulum membrane. The enzyme catalyses a 1,2-diacylglycerol + a 1,2-diacyl-sn-glycero-3-phosphocholine = a triacylglycerol + a 1-acyl-sn-glycero-3-phosphocholine. It carries out the reaction a 1-O-alkyl-2-acyl-sn-glycero-3-phosphocholine + a 1,2-diacylglycerol = a 1-O-alkyl-sn-glycero-3-phosphocholine + a triacylglycerol. It catalyses the reaction a 2-acylglycerol + an acyl-CoA = a 1,2-diacylglycerol + CoA. The catalysed reaction is an acyl-CoA + a 1,2-diacyl-sn-glycerol = a triacyl-sn-glycerol + CoA. The enzyme catalyses 2-(9Z-octadecenoyl)-glycerol + (9Z)-octadecenoyl-CoA = 1,2-di-(9Z-octadecenoyl)-glycerol + CoA. It carries out the reaction 1,2-di-(9Z-octadecenoyl)-sn-glycerol + (9Z)-octadecenoyl-CoA = 1,2,3-tri-(9Z-octadecenoyl)-glycerol + CoA. Its activity is regulated as follows. Acyltransferase activity is specifically inhibited by TMX1 at the endoplasmic reticulum, restricting accumulation of triacylglycerol. Its function is as follows. Catalytic subunit of the alternative triglyceride biosynthesis pathway, which mediates formation of triacylglycerol from diacylglycerol and membrane phospholipids. Synthesizes triacylglycerol at the expense of membrane phospholipids, such as phosphatidylcholine (PC) and its ether-linked form (ePC), thereby altering the composition of membranes. The alternative triglyceride biosynthesis pathway is probably required to provide the energy required for rapid growth when fuel sources are limiting. It maintains mitochondrial function during periods of extracellular lipid starvation. Can also use acyl-CoA as donor: acts as a acyl-CoA:monoacylglycerol acyltransferase (MGAT), but also shows acyl-CoA:diacylglycerol acyltransferase (DGAT) activity. This chain is DGAT1/2-independent enzyme synthesizing storage lipids, found in Homo sapiens (Human).